The following is a 539-amino-acid chain: Glycerophosphoinositol inositolphosphodiesterase GDPD2 (539 aa).

At Met1–Trp40 the chain is on the cytoplasmic side. Residues Phe41–Leu61 traverse the membrane as a helical segment. The Extracellular portion of the chain corresponds to Leu62–Ser83. Residues Leu84 to Gly104 form a helical membrane-spanning segment. Over Leu105 to Lys121 the chain is Cytoplasmic. A helical transmembrane segment spans residues Val122 to Trp142. Residues Arg143–Gln154 are Extracellular-facing. A helical membrane pass occupies residues Ala155–Val175. Over Ala176 to Val189 the chain is Cytoplasmic. Residues Leu190–Ile210 form a helical membrane-spanning segment. Residues Ser211–Tyr491 are Extracellular-facing. One can recognise a GP-PDE domain in the interval Pro225–Gln480. Residues Glu257, Asp259, and His272 each coordinate a divalent metal cation. N-linked (GlcNAc...) asparagine glycosylation occurs at Asn333. A helical membrane pass occupies residues Leu492–Leu512. Topologically, residues Arg513–Glu539 are cytoplasmic.

The protein belongs to the glycerophosphoryl diester phosphodiesterase family. Requires Ca(2+) as cofactor. In terms of tissue distribution, detected in spleen, femur and calvaria.

Its subcellular location is the cell membrane. It localises to the cytoplasm. The protein localises to the cytoskeleton. The enzyme catalyses sn-glycero-3-phospho-1D-myo-inositol + H2O = 1D-myo-inositol 1-phosphate + glycerol + H(+). Has glycerophosphoinositol inositolphosphodiesterase activity and specifically hydrolyzes glycerophosphoinositol, with no activity for other substrates such as glycerophosphoinositol 4-phosphate, glycerophosphocholine, glycerophosphoethanolamine, and glycerophosphoserine. Accelerates the program of osteoblast differentiation and growth. May play a role in remodeling of the actin cytoskeleton. In Mus musculus (Mouse), this protein is Glycerophosphoinositol inositolphosphodiesterase GDPD2 (Gdpd2).